Reading from the N-terminus, the 309-residue chain is Branched-chain-amino-acid aminotransferase (309 aa).

At K160 the chain carries N6-(pyridoxal phosphate)lysine.

The protein belongs to the class-IV pyridoxal-phosphate-dependent aminotransferase family. Homohexamer. Requires pyridoxal 5'-phosphate as cofactor.

It catalyses the reaction L-leucine + 2-oxoglutarate = 4-methyl-2-oxopentanoate + L-glutamate. The enzyme catalyses L-isoleucine + 2-oxoglutarate = (S)-3-methyl-2-oxopentanoate + L-glutamate. It carries out the reaction L-valine + 2-oxoglutarate = 3-methyl-2-oxobutanoate + L-glutamate. It participates in amino-acid biosynthesis; L-isoleucine biosynthesis; L-isoleucine from 2-oxobutanoate: step 4/4. The protein operates within amino-acid biosynthesis; L-leucine biosynthesis; L-leucine from 3-methyl-2-oxobutanoate: step 4/4. Its pathway is amino-acid biosynthesis; L-valine biosynthesis; L-valine from pyruvate: step 4/4. In terms of biological role, acts on leucine, isoleucine and valine. The polypeptide is Branched-chain-amino-acid aminotransferase (ilvE) (Salmonella typhi).